An 800-amino-acid polypeptide reads, in one-letter code: Nucleolar complex protein 3 homolog (800 aa).

Residues 37–90 are disordered; it reads STIKKYRKEQRKLRQAVKDAVSKKPFPLEDPKSKRPVKGMEREEEDEEDQALPL. Residues 40-51 show a composition bias toward basic residues; sequence KKYRKEQRKLRQ. Residues 52-77 are compositionally biased toward basic and acidic residues; it reads AVKDAVSKKPFPLEDPKSKRPVKGME. Positions 78–90 are enriched in acidic residues; sequence REEEDEEDQALPL. Lysine 333 participates in a covalent cross-link: Glycyl lysine isopeptide (Lys-Gly) (interchain with G-Cter in SUMO2). The stretch at 450–489 forms a coiled coil; the sequence is FKEKRKTLSRMQRKWKKAEEKLERELREAEASESTERKLK.

It belongs to the CBF/MAK21 family.

The protein localises to the nucleus. The protein resides in the nucleolus. In Cricetulus griseus (Chinese hamster), this protein is Nucleolar complex protein 3 homolog (NOC3L).